Here is a 270-residue protein sequence, read N- to C-terminus: Glutamate racemase (270 aa).

Substrate is bound by residues 7–8 (DS) and 39–40 (YG). Cys-70 (proton donor/acceptor) is an active-site residue. 71-72 (NT) provides a ligand contact to substrate. Catalysis depends on Cys-194, which acts as the Proton donor/acceptor. 195 to 196 (TH) lines the substrate pocket.

This sequence belongs to the aspartate/glutamate racemases family.

The catalysed reaction is L-glutamate = D-glutamate. It functions in the pathway cell wall biogenesis; peptidoglycan biosynthesis. Functionally, provides the (R)-glutamate required for cell wall biosynthesis. The polypeptide is Glutamate racemase (Cereibacter sphaeroides (strain ATCC 17023 / DSM 158 / JCM 6121 / CCUG 31486 / LMG 2827 / NBRC 12203 / NCIMB 8253 / ATH 2.4.1.) (Rhodobacter sphaeroides)).